The chain runs to 637 residues: Capsid scaffolding protein (637 aa).

Catalysis depends on charge relay system residues histidine 61, serine 129, and histidine 148. Disordered regions lie at residues 262–326 (PERG…PGDG), 414–479 (LPAA…PHET), and 502–608 (HAPY…EAGA). Positions 277 to 317 (SPAASVPAPQVAVRARQVASSSSSSSFPAPADMNPVSASGA) are enriched in low complexity. The interval 326–345 (GSYLWIPASHYNQLVTGQSA) is interaction with pAP. The Nuclear localization signal motif lies at 428–431 (KRRR). Composition is skewed to basic and acidic residues over residues 432–450 (HEVE…DRDF) and 457–468 (ARPEPRPVDSRR). 2 stretches are compositionally biased toward pro residues: residues 537 to 559 (LPPP…PSYP) and 566 to 594 (GPAP…PPAA). Residues 595 to 608 (SLPQPEAPGAEAGA) are compositionally biased toward low complexity. The interaction with major capsid protein stretch occupies residues 617 to 637 (HVNVDTARAADLFVSQMMGSR).

The protein belongs to the herpesviridae capsid scaffolding protein family. In terms of assembly, homomultimer. Interacts with major capsid protein. Exists in a monomer-dimer equilibrium with the dimer being the active species. In terms of processing, capsid scaffolding protein is cleaved by assemblin after formation of the spherical procapsid. As a result, the capsid obtains its mature, icosahedral shape. Cleavages occur at two or more sites: release (R-site) and maturation (M-site).

It is found in the host cytoplasm. The protein resides in the host nucleus. It carries out the reaction Cleaves -Ala-|-Ser- and -Ala-|-Ala- bonds in the scaffold protein.. Functionally, acts as a scaffold protein by binding major capsid protein in the cytoplasm, inducing the nuclear localization of both proteins. Multimerizes in the nucleus such as major capsid protein forms the icosahedral T=16 capsid. Autocatalytic cleavage releases the assembly protein, and subsequently abolishes interaction with major capsid protein. Cleavages products are evicted from the capsid before or during DNA packaging. Protease that plays an essential role in virion assembly within the nucleus. Catalyzes the cleavage of the assembly protein after formation of the spherical procapsid. By that cleavage, the capsid matures and gains its icosahedral shape. The cleavage sites seem to include -Ala-Ser-, -Ala-Ala-, as well as Ala-Thr bonds. Assemblin and cleavages products are evicted from the capsid before or during DNA packaging. Its function is as follows. Plays a major role in capsid assembly. Acts as a scaffold protein by binding major capsid protein. Multimerizes in the nucleus such as major capsid protein forms the icosahedral T=16 capsid. Cleaved by assemblin after capsid completion. The cleavages products are evicted from the capsid before or during DNA packaging. In Homo sapiens (Human), this protein is Capsid scaffolding protein (UL26).